Reading from the N-terminus, the 122-residue chain is Large ribosomal subunit protein uL14 (122 aa).

Belongs to the universal ribosomal protein uL14 family. As to quaternary structure, part of the 50S ribosomal subunit. Forms a cluster with proteins L3 and L19. In the 70S ribosome, L14 and L19 interact and together make contacts with the 16S rRNA in bridges B5 and B8.

Its function is as follows. Binds to 23S rRNA. Forms part of two intersubunit bridges in the 70S ribosome. This Erythrobacter litoralis (strain HTCC2594) protein is Large ribosomal subunit protein uL14.